The sequence spans 517 residues: GTPase Obg (517 aa).

One can recognise an Obg domain in the interval 2-159; it reads ATFVDTVTLH…GDVVLELKVV (158 aa). Positions 160–336 constitute an OBG-type G domain; that stretch reads ADVALVGYPS…LSFALAELVK (177 aa). GTP is bound by residues 166-173, 191-195, 212-215, 288-291, and 317-319; these read GYPSAGKS, FTTLH, DVPG, NKID, and STV. Positions 173 and 193 each coordinate Mg(2+). In terms of domain architecture, OCT spans 355–439; the sequence is PRAVDEKPFT…GDGVVFDWEP (85 aa). Positions 490–517 are disordered; it reads EGEAGLWADEDGTGQDGTDEDATTDAKA. Residues 497–517 are compositionally biased toward acidic residues; it reads ADEDGTGQDGTDEDATTDAKA.

Belongs to the TRAFAC class OBG-HflX-like GTPase superfamily. OBG GTPase family. Monomer. Mg(2+) serves as cofactor.

It localises to the cytoplasm. Functionally, an essential GTPase which binds GTP, GDP and possibly (p)ppGpp with moderate affinity, with high nucleotide exchange rates and a fairly low GTP hydrolysis rate. Plays a role in control of the cell cycle, stress response, ribosome biogenesis and in those bacteria that undergo differentiation, in morphogenesis control. The sequence is that of GTPase Obg from Clavibacter sepedonicus (Clavibacter michiganensis subsp. sepedonicus).